A 241-amino-acid chain; its full sequence is DNA repair protein RecO (241 aa).

This sequence belongs to the RecO family.

Functionally, involved in DNA repair and RecF pathway recombination. In Rickettsia canadensis (strain McKiel), this protein is DNA repair protein RecO.